A 260-amino-acid polypeptide reads, in one-letter code: ATP synthase subunit a (260 aa).

6 consecutive transmembrane segments (helical) span residues 37-57 (FTNA…FMTL), 95-115 (FFPF…IGMF), 125-145 (IVVT…TGFV), 154-174 (VFVP…IEII), 191-211 (MLAG…FMTM), and 233-253 (EFLV…MYLH).

Belongs to the ATPase A chain family. In terms of assembly, F-type ATPases have 2 components, CF(1) - the catalytic core - and CF(0) - the membrane proton channel. CF(1) has five subunits: alpha(3), beta(3), gamma(1), delta(1), epsilon(1). CF(0) has three main subunits: a(1), b(2) and c(9-12). The alpha and beta chains form an alternating ring which encloses part of the gamma chain. CF(1) is attached to CF(0) by a central stalk formed by the gamma and epsilon chains, while a peripheral stalk is formed by the delta and b chains.

The protein localises to the cell inner membrane. In terms of biological role, key component of the proton channel; it plays a direct role in the translocation of protons across the membrane. This is ATP synthase subunit a from Parvibaculum lavamentivorans (strain DS-1 / DSM 13023 / NCIMB 13966).